We begin with the raw amino-acid sequence, 436 residues long: Proteasome-activating nucleotidase (436 aa).

Residues 15-97 (EELCRLYRSL…LKSESEQLRS (83 aa)) are a coiled coil. Residues 222–227 (GTGKTL) and His361 each bind ATP. The interval 434–436 (MFA) is docks into pockets in the proteasome alpha-ring to cause gate opening.

The protein belongs to the AAA ATPase family. As to quaternary structure, homohexamer. The hexameric complex has a two-ring architecture resembling a top hat that caps the 20S proteasome core at one or both ends. Upon ATP-binding, the C-terminus of PAN interacts with the alpha-rings of the proteasome core by binding to the intersubunit pockets.

The protein localises to the cytoplasm. Its function is as follows. ATPase which is responsible for recognizing, binding, unfolding and translocation of substrate proteins into the archaeal 20S proteasome core particle. Is essential for opening the gate of the 20S proteasome via an interaction with its C-terminus, thereby allowing substrate entry and access to the site of proteolysis. Thus, the C-termini of the proteasomal ATPase function like a 'key in a lock' to induce gate opening and therefore regulate proteolysis. Unfolding activity requires energy from ATP hydrolysis, whereas ATP binding alone promotes ATPase-20S proteasome association which triggers gate opening, and supports translocation of unfolded substrates. In Methanoregula boonei (strain DSM 21154 / JCM 14090 / 6A8), this protein is Proteasome-activating nucleotidase.